The primary structure comprises 122 residues: Large ribosomal subunit protein bL12 (122 aa).

This sequence belongs to the bacterial ribosomal protein bL12 family. As to quaternary structure, homodimer. Part of the ribosomal stalk of the 50S ribosomal subunit. Forms a multimeric L10(L12)X complex, where L10 forms an elongated spine to which 2 to 4 L12 dimers bind in a sequential fashion. Binds GTP-bound translation factors.

Its function is as follows. Forms part of the ribosomal stalk which helps the ribosome interact with GTP-bound translation factors. Is thus essential for accurate translation. The protein is Large ribosomal subunit protein bL12 of Buchnera aphidicola subsp. Cinara cedri (strain Cc).